Reading from the N-terminus, the 77-residue chain is MMFTPLIVLTLLVLATAEHQCGPNEQWSDCPKCELQCGESDKPCATICGEPKCYCSPDKYRRIPDGRCIRKIQCPQH.

The first 17 residues, Met-1–Ala-17, serve as a signal peptide directing secretion. Disulfide bonds link Cys-21/Cys-53, Cys-30/Cys-48, Cys-33/Cys-44, Cys-37/Cys-74, and Cys-55/Cys-68. Residues Cys-21 to Cys-74 enclose the TIL domain.

It localises to the secreted. Defends the organism against the host's proteinases. The polypeptide is Serine protease inhibitor 2 (Anisakis simplex (Herring worm)).